The chain runs to 180 residues: 3-deoxy-D-manno-octulosonate 8-phosphate phosphatase KdsC (180 aa).

2 residues coordinate Mg(2+): D14 and D16. Residues D16, 37-41 (HVRDG), K45, R60, R68, and K84 each bind substrate. Residue D107 participates in Mg(2+) binding.

The protein belongs to the KdsC family. In terms of assembly, homotetramer. It depends on Mg(2+) as a cofactor.

The catalysed reaction is 3-deoxy-alpha-D-manno-2-octulosonate-8-phosphate + H2O = 3-deoxy-alpha-D-manno-oct-2-ulosonate + phosphate. Functionally, catalyzes the hydrolysis of 3-deoxy-D-manno-octulosonate 8-phosphate (KDO 8-P) to 3-deoxy-D-manno-octulosonate (KDO) and inorganic phosphate. This Haemophilus influenzae (strain ATCC 51907 / DSM 11121 / KW20 / Rd) protein is 3-deoxy-D-manno-octulosonate 8-phosphate phosphatase KdsC.